The sequence spans 1639 residues: Merozoite surface protein 1 (1639 aa).

The first 19 residues, 1-19 (MKIIFFLCSFLFFIINTQC), serve as a signal peptide directing secretion. Composition is skewed to polar residues over residues 58–67 (SGTAVTTSTP) and 107–119 (NSRR…NSSD). Disordered stretches follow at residues 58–78 (SGTA…SGGS) and 94–122 (VASG…DSDA). Residues N116 and N268 are each glycosylated (N-linked (GlcNAc...) asparagine). The segment at 689–764 (KKNIKTEGQS…VPTPPAPVNN (76 aa)) is disordered. Composition is skewed to polar residues over residues 694 to 704 (TEGQSDNSEPS) and 711 to 722 (GQATTKPGQQAG). Residues 730–741 (VQAQAQEQKQAQ) show a composition bias toward low complexity. N-linked (GlcNAc...) asparagine glycosylation is found at N764, N768, N783, and N844. The segment at 893–915 (SMQPLSLTPQDKPEVSANDDTSH) is disordered. N920, N964, N1058, N1165, and N1174 each carry an N-linked (GlcNAc...) asparagine glycan. Residues 1002 to 1116 (QLSFDLYNKY…EESIQTEDNY (115 aa)) form a required for binding to host erythrocyte cell membrane region. Residues 1199–1212 (VSESGSDTLEQSQP) show a composition bias toward polar residues. The tract at residues 1199–1229 (VSESGSDTLEQSQPKKPASTHVGAESNTITT) is disordered. N-linked (GlcNAc...) asparagine glycans are attached at residues N1445 and N1526. 2 consecutive EGF-like domains span residues 1530-1570 (HQCV…VENP) and 1571-1618 (NPTC…IFCS). Cystine bridges form between C1532–C1543, C1537–C1553, C1555–C1566, C1574–C1587, C1581–C1601, and C1603–C1617. S1618 is lipidated: GPI-anchor amidated serine. Residues 1619–1639 (SSNFLGISFLLILMLILYSFI) constitute a propeptide, removed in mature form.

Forms a complex composed of subunits p83, p30, p38, and p42 which remain non-covalently associated; the complex is formed at the merozoite surface prior to egress from host erythrocytes. Forms a complex composed of processed MSP1 subunits, MSP6 subunit p36 and MSP7; the complex is formed at the merozoite surface prior to egress from host erythrocytes. Within the complex, interacts (via subunit p38) with MSP6 subunit p36 and (via subunits p83, p30 and p38) with MSP7 (via subunit p22). Forms a complex composed of MSP1, MSP6, DBLMSP1 and DBLMSP2. Within the complex, interacts (via subunit p38) with DBLMSP1 and DBLMSP2. Forms a complex composed of MSP1, and rhoptry proteins RhopH3, RAP1 and CLAG9/RhopH3. Within the complex, interacts (via subunits p42 and p19) with RhopH3 (via C-terminus). Forms a complex composed of MSP1, MSP6, MSP7, MSP9 and MSP3; within the complex, MSP6 and MSP9 mediate the binding to the host erythrocyte. Interacts (via subunits p19 and p42) with MSP9; the interaction is direct; MSP1 subunits p19 or p42, and MSP9 form a co-ligand complex that interacts with host SLC4A1/Band 3 protein. May interact with PFD6. Interacts with host spectrin. As to quaternary structure, interacts with host glycophorin GYPA in a sialic acid-independent manner. In terms of assembly, interacts with host proinflammatory cytokine S100P; the interaction blocks S100P inflammatory and chemotactic activities. Interacts with host SLC4A1/Band 3 (via 5ABC region) on the host erythrocyte surface in a sialic acid-independent manner. In terms of processing, the p190 precursor is cleaved by SUB1 prior to merozoite egress into 4 subunits p83, p30, p38, and p42 which remain non-covalently associated. SUB1-mediated proteolytic cleavage occurs in an orderly manner; the first cleavage occurs at the p83/p30 site, followed by cleavage at the p30/p38 site, the last cleavage occurs at the p38/p42 site. The order of cleavage is essential for parasite viability. SUB1-mediated processing is essential for merozoite egress. In a second processing step during erythrocyte invasion, p42 is cleaved by SUB2 into p33 and p19; the latter remains attached to the merozoite surface via its GPI-anchor and stays on the surface during the subsequent ring stage.

Its subcellular location is the cell membrane. It localises to the secreted. It is found in the vacuole membrane. During the asexual blood stage, involved in merozoite egress from host erythrocytes possibly via its interaction with the host cytoskeleton protein spectrin resulting in the destabilization of the host cytoskeleton and thus leading to erythrocyte cell membrane rupture. Involved in the binding to host erythrocytes and is required for host erythrocyte invasion. In terms of biological role, by binding to host proinflammatory cytokine S100P may interfere with host immune responses. Functionally, involved in merozoite invasion of host erythrocytes. May play a role in the biogenesis and/or function of the food vacuole during the intraerythrocytic development. The polypeptide is Merozoite surface protein 1 (Plasmodium falciparum (isolate Wellcome)).